A 343-amino-acid chain; its full sequence is ATP-dependent 6-phosphofructokinase (343 aa).

Residues G10, 73-74 (RV), and 103-106 (GEGT) each bind ATP. E104 provides a ligand contact to Mg(2+). Substrate is bound by residues 126–128 (TID), R163, 170–172 (MGR), E223, R267, and 273–276 (HIQR). D128 functions as the Proton acceptor in the catalytic mechanism.

This sequence belongs to the phosphofructokinase type A (PFKA) family. Mixed-substrate PFK group III subfamily. In terms of assembly, homodimer or homotetramer. The cofactor is Mg(2+).

Its subcellular location is the cytoplasm. It catalyses the reaction beta-D-fructose 6-phosphate + ATP = beta-D-fructose 1,6-bisphosphate + ADP + H(+). The enzyme catalyses D-tagatofuranose 6-phosphate + ATP = D-tagatofuranose 1,6-bisphosphate + ADP + H(+). It participates in carbohydrate degradation; glycolysis; D-glyceraldehyde 3-phosphate and glycerone phosphate from D-glucose: step 3/4. Its function is as follows. Catalyzes the phosphorylation of D-fructose 6-phosphate to fructose 1,6-bisphosphate by ATP, the first committing step of glycolysis. Can also catalyze the phosphorylation of tagatose-6-phosphate. This is ATP-dependent 6-phosphofructokinase from Mycobacterium tuberculosis (strain CDC 1551 / Oshkosh).